The following is a 953-amino-acid chain: Leucine-rich repeat receptor protein kinase HPCA1 (953 aa).

The first 23 residues, 1-23 (MSSRTGASLLLILFFFQICSVSA), serve as a signal peptide directing secretion. Topologically, residues 24–558 (LTNGLDASAL…EVSSKSSNKS (535 aa)) are extracellular. LRR repeat units follow at residues 64–88 (NDRV…ISFL), 89–113 (SELR…IGNL), 115–137 (KLRN…IGTL), 138–162 (KELI…GLLS), 164–187 (LYWF…TSAP), and 192–216 (LLQT…LFSS). An N-linked (GlcNAc...) asparagine glycan is attached at Asn-182. N-linked (GlcNAc...) asparagine glycosylation occurs at Asn-217. LRR repeat units follow at residues 218 to 241 (MSLI…LSLV), 242 to 265 (KTLT…LNNL), 266 to 290 (TNLN…SLTS), 292 to 311 (YTLD…SWIS), 313 to 337 (LPSL…FFSP), 339 to 361 (QLQT…TDVS), and 362 to 384 (SQLE…ANKV). 3 N-linked (GlcNAc...) asparagine glycosylation sites follow: Asn-264, Asn-284, and Asn-298. Asn-411 is a glycosylation site (N-linked (GlcNAc...) asparagine). Intrachain disulfides connect Cys-421/Cys-424 and Cys-434/Cys-436. 4 N-linked (GlcNAc...) asparagine glycosylation sites follow: Asn-456, Asn-459, Asn-510, and Asn-523. Residues 559–579 (ILIGAVVGVVVLLLLLTIAGI) form a helical membrane-spanning segment. Residues 580 to 953 (YALRQKKRAE…NFPASKLEPQ (374 aa)) lie on the Cytoplasmic side of the membrane. Phosphoserine occurs at positions 606 and 607. In terms of domain architecture, Protein kinase spans 631-905 (FSEANDVGGG…EVVKEIENIM (275 aa)). Residues 637–645 (VGGGGYGKV) and Lys-659 each bind ATP. The Proton acceptor role is filled by Asp-755. 3 positions are modified to phosphothreonine: Thr-786, Thr-789, and Thr-790. The segment covering 912-921 (PNSDSATSSR) has biased composition (polar residues). The disordered stretch occupies residues 912 to 953 (PNSDSATSSRTYEDAIKGSGDPYGSESFQYSGNFPASKLEPQ). Position 942 is a phosphoserine (Ser-942).

This sequence belongs to the protein kinase superfamily. Ser/Thr protein kinase family. In terms of processing, autophosphorylated at Ser-606, Ser-607, Thr-786, Thr-789, Thr-790 and Ser-942 in response to extracellular hydrogen peroxide. As to expression, widely expressed.

It localises to the cell membrane. The enzyme catalyses L-seryl-[protein] + ATP = O-phospho-L-seryl-[protein] + ADP + H(+). The catalysed reaction is L-threonyl-[protein] + ATP = O-phospho-L-threonyl-[protein] + ADP + H(+). With respect to regulation, activated by autophosphorylation on serine and threonine residues in response to extracellular hydrogen peroxide. Leucine-rich repeat receptor protein kinase that acts as sensor of extracellular hydrogen peroxide. Required for intracellular calcium influx in response to extracellular hydrogen peroxide. Mediates hydrogen peroxide-induced activation of calcium channels in guard cells and is required for stomatal closure. This Arabidopsis thaliana (Mouse-ear cress) protein is Leucine-rich repeat receptor protein kinase HPCA1.